The following is a 216-amino-acid chain: Kynurenine formamidase (216 aa).

Trp25 contributes to the substrate binding site. Zn(2+) is bound by residues His55, His59, and Asp61. Residue His65 is the Proton donor/acceptor of the active site. Residues His167 and Glu179 each coordinate Zn(2+).

This sequence belongs to the Cyclase 1 superfamily. KynB family. Homodimer. Zn(2+) is required as a cofactor.

The enzyme catalyses N-formyl-L-kynurenine + H2O = L-kynurenine + formate + H(+). Its pathway is amino-acid degradation; L-tryptophan degradation via kynurenine pathway; L-kynurenine from L-tryptophan: step 2/2. Catalyzes the hydrolysis of N-formyl-L-kynurenine to L-kynurenine, the second step in the kynurenine pathway of tryptophan degradation. This is Kynurenine formamidase from Cupriavidus necator (strain ATCC 17699 / DSM 428 / KCTC 22496 / NCIMB 10442 / H16 / Stanier 337) (Ralstonia eutropha).